A 236-amino-acid polypeptide reads, in one-letter code: Small ribosomal subunit protein uS3 (236 aa).

Residues 39-107 form the KH type-2 domain; that stretch reads IRKFLKKELY…EISINIKEVK (69 aa). Over residues 213–229 the composition is skewed to basic and acidic residues; it reads QPEKKEEAPARDKEGRG. Positions 213-236 are disordered; it reads QPEKKEEAPARDKEGRGTRRRGRQ.

This sequence belongs to the universal ribosomal protein uS3 family. As to quaternary structure, part of the 30S ribosomal subunit. Forms a tight complex with proteins S10 and S14.

Functionally, binds the lower part of the 30S subunit head. Binds mRNA in the 70S ribosome, positioning it for translation. This chain is Small ribosomal subunit protein uS3, found in Wolinella succinogenes (strain ATCC 29543 / DSM 1740 / CCUG 13145 / JCM 31913 / LMG 7466 / NCTC 11488 / FDC 602W) (Vibrio succinogenes).